Reading from the N-terminus, the 279-residue chain is MDFDDHDDGDEEMPPMPVSSSYETPPQHGLAGGGMAPKPPGEIGSRVKGPSCGGGRYRECLKNHAVGIGGHAVDGCGEFMAAGEEGTIDALRCAACNCHRNFHRKESESLAGEGSPFSPAAVVPYGATPHHQFSPYYRTPAGYLHHHQHHMAAAAAAAAAAAGGYPQRPLALPSTSHSGRDDGDDLSGMVGPMSAVGPLSGMSLGAGPSGSGSGKKRFRTKFTQEQKDKMLAFAERVGWRIQKHDEAAVQQFCDEVGVKRHVLKVWMHNNKHTLGKKLP.

Residues M1–M13 show a composition bias toward acidic residues. The disordered stretch occupies residues M1–V47. The ZF-HD dimerization-type; degenerate zinc finger occupies Y57–E106. The tract at residues R168 to V190 is disordered. The homeobox DNA-binding region spans K215–L278.

As to quaternary structure, homo- and heterodimer with other ZFHD proteins.

The protein resides in the nucleus. Functionally, putative transcription factor. The polypeptide is Zinc-finger homeodomain protein 1 (ZHD1) (Oryza sativa subsp. japonica (Rice)).